Consider the following 155-residue polypeptide: 6,7-dimethyl-8-ribityllumazine synthase (155 aa).

5-amino-6-(D-ribitylamino)uracil is bound by residues tyrosine 23, 57–59 (AWE), and 81–83 (CVI). 86–87 (ET) provides a ligand contact to (2S)-2-hydroxy-3-oxobutyl phosphate. Histidine 89 serves as the catalytic Proton donor. 5-amino-6-(D-ribitylamino)uracil is bound at residue phenylalanine 114. Arginine 128 contributes to the (2S)-2-hydroxy-3-oxobutyl phosphate binding site.

This sequence belongs to the DMRL synthase family.

The enzyme catalyses (2S)-2-hydroxy-3-oxobutyl phosphate + 5-amino-6-(D-ribitylamino)uracil = 6,7-dimethyl-8-(1-D-ribityl)lumazine + phosphate + 2 H2O + H(+). The protein operates within cofactor biosynthesis; riboflavin biosynthesis; riboflavin from 2-hydroxy-3-oxobutyl phosphate and 5-amino-6-(D-ribitylamino)uracil: step 1/2. Its function is as follows. Catalyzes the formation of 6,7-dimethyl-8-ribityllumazine by condensation of 5-amino-6-(D-ribitylamino)uracil with 3,4-dihydroxy-2-butanone 4-phosphate. This is the penultimate step in the biosynthesis of riboflavin. This chain is 6,7-dimethyl-8-ribityllumazine synthase, found in Rhodopirellula baltica (strain DSM 10527 / NCIMB 13988 / SH1).